A 355-amino-acid polypeptide reads, in one-letter code: Syntaxin-5 (355 aa).

Topologically, residues 1 to 333 are cytoplasmic; sequence MIPRKRYGSK…KYFQSVTSNR (333 aa). Residues 245-247 carry the IxM motif; signal for cargo packaging into COPII-coated vesicles motif; the sequence is IDM. Residues 263–325 form the t-SNARE coiled-coil homology domain; it reads DSYIQSRADT…EAAHSEILKY (63 aa). Residues 287 to 318 are a coiled coil; the sequence is FQQLAHMVKEQEETIQRIDENVLGAQLDVEAA. Residues 334-354 form a helical; Anchor for type IV membrane protein membrane-spanning segment; the sequence is WLMVKIFLILIVFFIIFVVFL. A topological domain (vesicular) is located at residue A355.

It belongs to the syntaxin family. In terms of assembly, part of a ternary complex containing STX5A, NSFL1C and VCP. Part of a unique SNARE complex composed of the Golgi SNAREs GOSR1, GOSR2, YKT6 and VTI1A. Component of a SNARE complex consisting of STX5, YKT6, GOSR1 and BET1L. Interacts with BET1L. Interacts with BET1. Interacts with COG4. Interacts with GM130/GOLGA2. Interacts (via IxM motif) with SEC24C and SEC24D; mediates STX5 packaging into COPII-coated vesicles. Interacts with VLDLR; this interaction mediates VLDLR translocation from the endoplasmic reticulum to the plasma membrane.

It is found in the endoplasmic reticulum-Golgi intermediate compartment membrane. Its subcellular location is the golgi apparatus membrane. Its function is as follows. Mediates endoplasmic reticulum to Golgi transport. Together with p115/USO1 and GM130/GOLGA2, involved in vesicle tethering and fusion at the cis-Golgi membrane to maintain the stacked and inter-connected structure of the Golgi apparatus. In terms of biological role, required for Golgi to endoplasmic reticulum retrogade transport, and for intra-Golgi transport. This Mus musculus (Mouse) protein is Syntaxin-5 (Stx5).